Reading from the N-terminus, the 418-residue chain is Glutamyl-tRNA reductase (418 aa).

Substrate-binding positions include 49–52, Ser-107, 112–114, and Gln-118; these read TCNR and EPQ. The Nucleophile role is filled by Cys-50. An NADP(+)-binding site is contributed by 187–192; sequence GAGETI.

This sequence belongs to the glutamyl-tRNA reductase family. Homodimer.

It catalyses the reaction (S)-4-amino-5-oxopentanoate + tRNA(Glu) + NADP(+) = L-glutamyl-tRNA(Glu) + NADPH + H(+). The protein operates within porphyrin-containing compound metabolism; protoporphyrin-IX biosynthesis; 5-aminolevulinate from L-glutamyl-tRNA(Glu): step 1/2. Functionally, catalyzes the NADPH-dependent reduction of glutamyl-tRNA(Glu) to glutamate 1-semialdehyde (GSA). This Pseudoalteromonas translucida (strain TAC 125) protein is Glutamyl-tRNA reductase.